The primary structure comprises 320 residues: Mas-related G-protein coupled receptor member D (320 aa).

Topologically, residues 1 to 33 are extracellular; sequence MNQTLNSSGTAELALNHSRGSVVHAACLVLSSL. Residues Asn2, Asn6, and Asn16 are each glycosylated (N-linked (GlcNAc...) asparagine). Residues 34 to 54 form a helical membrane-spanning segment; it reads AMFTCLCGMAGNSMVIWLLGF. Topologically, residues 55–62 are cytoplasmic; sequence RMRRTPFS. The helical transmembrane segment at 63–83 threads the bilayer; sequence IYILNLAAADLLFVFCMAAML. The Extracellular portion of the chain corresponds to 84–112; sequence SLETQPLVSTTDKVHELMKRLKYFAYTVG. Residues 113–133 traverse the membrane as a helical segment; it reads LSLLTAISTQRCLSVLFPIWF. Topologically, residues 134–142 are cytoplasmic; sequence KCHRPRHLS. The chain crosses the membrane as a helical span at residues 143-163; the sequence is AWVCALLWMLCLLTNGLTSCF. At 164–182 the chain is on the extracellular side; the sequence is CSKFLKFNKDQCFRVDMVQ. The chain crosses the membrane as a helical span at residues 183–203; sequence AALIMGVLTPVMTLSSLTLFV. Residues 204–218 are Cytoplasmic-facing; that stretch reads RVRRSSQQWRRQPTR. A helical membrane pass occupies residues 219–239; it reads LFVVVLASVLVFLICSLPLGF. Topologically, residues 240–257 are extracellular; it reads YWFVLYWLNLPPDTKVLY. Residues 258 to 280 traverse the membrane as a helical segment; that stretch reads FNLSRLSSSMSSSANPLIYFLVG. The Cytoplasmic segment spans residues 281–320; that stretch reads SRRSRRLQGSLGTVLQRALREEPELEGGETPTTGTNEMGA. Residues 301–320 are disordered; the sequence is EEPELEGGETPTTGTNEMGA. Residues 308–320 show a composition bias toward low complexity; sequence GETPTTGTNEMGA.

Belongs to the G-protein coupled receptor 1 family. Mas subfamily. Co-expressed in the small diameter neurons with P2X3 and VR1 in dorsal root ganglia.

Its subcellular location is the cell membrane. In terms of biological role, may regulate nociceptor function and/or development, including the sensation or modulation of pain. Functions as a specific membrane receptor for beta-alanine. The receptor couples with G-protein G(q) and G(i). The chain is Mas-related G-protein coupled receptor member D (MRGPRD) from Macaca fascicularis (Crab-eating macaque).